A 437-amino-acid polypeptide reads, in one-letter code: Oxysterol-binding protein homolog 7 (437 aa).

A compositionally biased stretch (polar residues) spans 23–32 (IASNAANSKP). The disordered stretch occupies residues 23–42 (IASNAANSKPSGADTDDIDE). Residues 54–393 (IISQLKPGCD…EDLDYYIYKH (340 aa)) form an OSBP-related domain (ORD) region. A 1,2-diacyl-sn-glycero-3-phospho-(1D-myo-inositol 4-phosphate) contacts are provided by residues 64–69 (LSRITL), 126–129 (KPLN), and 157–158 (HH). Residues 64–69 (LSRITL) and N129 contribute to the a 1,2-diacyl-sn-glycero-3-phospho-L-serine site. An a 1,2-diacyl-sn-glycero-3-phospho-L-serine-binding site is contributed by S183. Residue K276 forms a Glycyl lysine isopeptide (Lys-Gly) (interchain with G-Cter in ubiquitin) linkage. 3 residues coordinate a 1,2-diacyl-sn-glycero-3-phospho-(1D-myo-inositol 4-phosphate): K351, E355, and R359.

The protein belongs to the OSBP family. In terms of assembly, interacts with the AAA ATPase VPS4; regulates OSH7 membrane association. VPS4 is required for membrane dissociation of OSH7.

The protein localises to the cytoplasm. It is found in the cell membrane. Its subcellular location is the endoplasmic reticulum membrane. The enzyme catalyses a 1,2-diacyl-sn-glycero-3-phospho-L-serine(in) = a 1,2-diacyl-sn-glycero-3-phospho-L-serine(out). Its function is as follows. ipid transport protein (LTP) involved in non-vesicular transfer of lipids between membranes. Functions in phosphoinositide-coupled directional transport of various lipids by carrying the lipid molecule in a hydrophobic pocket and transferring it between membranes through the cytosol. Involved in maintenance of intracellular sterol distribution and homeostasis. Involved in lipid countertransport between the endoplasmic reticulum and the plasma membrane. Specifically exchanges phosphatidylserine with phosphatidylinositol 4-phosphate (PI4P), delivering phosphatidylserine to the PM in exchange for PI4P, which is delivered to the ER-localized PI4P phosphatase SAC1 for degradation. Thus, by maintaining a PI4P gradient at the ER/PM interface, SAC1 drives PS transport. Binds phosphatidylserine and PI4P in a mutually exclusive manner. This is Oxysterol-binding protein homolog 7 from Saccharomyces cerevisiae (strain ATCC 204508 / S288c) (Baker's yeast).